The chain runs to 347 residues: D-alanine--D-alanine ligase (347 aa).

The region spanning lysine 131–aspartate 333 is the ATP-grasp domain. Glutamate 161–glutamate 216 is an ATP binding site. Residues aspartate 287, glutamate 300, and asparagine 302 each coordinate Mg(2+).

It belongs to the D-alanine--D-alanine ligase family. The cofactor is Mg(2+). Mn(2+) serves as cofactor.

The protein localises to the cytoplasm. It catalyses the reaction 2 D-alanine + ATP = D-alanyl-D-alanine + ADP + phosphate + H(+). The protein operates within cell wall biogenesis; peptidoglycan biosynthesis. Functionally, cell wall formation. The protein is D-alanine--D-alanine ligase of Streptococcus pneumoniae (strain ATCC BAA-255 / R6).